The chain runs to 181 residues: Isopentenyl-diphosphate Delta-isomerase (181 aa).

Residues His25 and His32 each coordinate Mn(2+). In terms of domain architecture, Nudix hydrolase spans 30 to 164 (PLHLAFSCWL…PWAFSPWMVM (135 aa)). The active site involves Cys67. His69 is a binding site for Mn(2+). Glu87 lines the Mg(2+) pocket. Mn(2+) is bound by residues Glu114 and Glu116. Residue Glu116 is part of the active site.

The protein belongs to the IPP isomerase type 1 family. Homodimer. Mg(2+) is required as a cofactor. Requires Mn(2+) as cofactor.

The protein resides in the cytoplasm. It catalyses the reaction isopentenyl diphosphate = dimethylallyl diphosphate. It participates in isoprenoid biosynthesis; dimethylallyl diphosphate biosynthesis; dimethylallyl diphosphate from isopentenyl diphosphate: step 1/1. Catalyzes the 1,3-allylic rearrangement of the homoallylic substrate isopentenyl (IPP) to its highly electrophilic allylic isomer, dimethylallyl diphosphate (DMAPP). The polypeptide is Isopentenyl-diphosphate Delta-isomerase (Salmonella paratyphi B (strain ATCC BAA-1250 / SPB7)).